Consider the following 700-residue polypeptide: Peroxisomal acyl-coenzyme A oxidase 3 (700 aa).

Residue alanine 2 is modified to N-acetylalanine. Threonine 281 carries the post-translational modification Phosphothreonine. Residues serine 698–leucine 700 carry the Microbody targeting signal motif.

Belongs to the acyl-CoA oxidase family. FAD is required as a cofactor.

Its subcellular location is the peroxisome. The catalysed reaction is a 2,3-saturated acyl-CoA + O2 = a (2E)-enoyl-CoA + H2O2. It carries out the reaction (2S)-pristanoyl-CoA + O2 = (2E)-pristenoyl-CoA + H2O2. It catalyses the reaction tetracosanoyl-CoA + O2 = (2E)-tetracosenoyl-CoA + H2O2. The enzyme catalyses hexadecanoyl-CoA + O2 = (2E)-hexadecenoyl-CoA + H2O2. The catalysed reaction is hexadecanedioyl-CoA + O2 = (2E)-hexadecenedioyl-CoA + H2O2. The protein operates within lipid metabolism; peroxisomal fatty acid beta-oxidation. Oxidizes the CoA-esters of 2-methyl-branched fatty acids. This Homo sapiens (Human) protein is Peroxisomal acyl-coenzyme A oxidase 3 (ACOX3).